The chain runs to 161 residues: SsrA-binding protein (161 aa).

Basic and acidic residues predominate over residues 139–153 (RESIKRKEENRELDR). The disordered stretch occupies residues 139 to 161 (RESIKRKEENRELDRLRKRRRQE).

The protein belongs to the SmpB family.

The protein localises to the cytoplasm. Required for rescue of stalled ribosomes mediated by trans-translation. Binds to transfer-messenger RNA (tmRNA), required for stable association of tmRNA with ribosomes. tmRNA and SmpB together mimic tRNA shape, replacing the anticodon stem-loop with SmpB. tmRNA is encoded by the ssrA gene; the 2 termini fold to resemble tRNA(Ala) and it encodes a 'tag peptide', a short internal open reading frame. During trans-translation Ala-aminoacylated tmRNA acts like a tRNA, entering the A-site of stalled ribosomes, displacing the stalled mRNA. The ribosome then switches to translate the ORF on the tmRNA; the nascent peptide is terminated with the 'tag peptide' encoded by the tmRNA and targeted for degradation. The ribosome is freed to recommence translation, which seems to be the essential function of trans-translation. The protein is SsrA-binding protein of Syntrophobacter fumaroxidans (strain DSM 10017 / MPOB).